The sequence spans 316 residues: Iron-sulfur cluster assembly SufBD family protein MJ0034 (316 aa).

Belongs to the iron-sulfur cluster assembly SufBD family.

This Methanocaldococcus jannaschii (strain ATCC 43067 / DSM 2661 / JAL-1 / JCM 10045 / NBRC 100440) (Methanococcus jannaschii) protein is Iron-sulfur cluster assembly SufBD family protein MJ0034.